The sequence spans 142 residues: Large ribosomal subunit protein uL13 (142 aa).

This sequence belongs to the universal ribosomal protein uL13 family. As to quaternary structure, part of the 50S ribosomal subunit.

Its function is as follows. This protein is one of the early assembly proteins of the 50S ribosomal subunit, although it is not seen to bind rRNA by itself. It is important during the early stages of 50S assembly. This is Large ribosomal subunit protein uL13 from Polynucleobacter asymbioticus (strain DSM 18221 / CIP 109841 / QLW-P1DMWA-1) (Polynucleobacter necessarius subsp. asymbioticus).